Reading from the N-terminus, the 238-residue chain is Ribonuclease PH (238 aa).

Phosphate-binding positions include Arg-86 and 124-126; that span reads GTR.

This sequence belongs to the RNase PH family. Homohexameric ring arranged as a trimer of dimers.

The catalysed reaction is tRNA(n+1) + phosphate = tRNA(n) + a ribonucleoside 5'-diphosphate. In terms of biological role, phosphorolytic 3'-5' exoribonuclease that plays an important role in tRNA 3'-end maturation. Removes nucleotide residues following the 3'-CCA terminus of tRNAs; can also add nucleotides to the ends of RNA molecules by using nucleoside diphosphates as substrates, but this may not be physiologically important. Probably plays a role in initiation of 16S rRNA degradation (leading to ribosome degradation) during starvation. In Cupriavidus metallidurans (strain ATCC 43123 / DSM 2839 / NBRC 102507 / CH34) (Ralstonia metallidurans), this protein is Ribonuclease PH.